The sequence spans 398 residues: Methionine import ATP-binding protein MetN 2 (398 aa).

Residues 43-282 (VSLEQVGKVF…PRHGATRALL (240 aa)) form the ABC transporter domain. Position 79 to 86 (79 to 86 (GRSGAGKS)) interacts with ATP.

Belongs to the ABC transporter superfamily. Methionine importer (TC 3.A.1.24) family. The complex is composed of two ATP-binding proteins (MetN), two transmembrane proteins (MetI) and a solute-binding protein (MetQ).

It is found in the cell inner membrane. The enzyme catalyses L-methionine(out) + ATP + H2O = L-methionine(in) + ADP + phosphate + H(+). The catalysed reaction is D-methionine(out) + ATP + H2O = D-methionine(in) + ADP + phosphate + H(+). In terms of biological role, part of the ABC transporter complex MetNIQ involved in methionine import. Responsible for energy coupling to the transport system. The protein is Methionine import ATP-binding protein MetN 2 of Burkholderia lata (strain ATCC 17760 / DSM 23089 / LMG 22485 / NCIMB 9086 / R18194 / 383).